We begin with the raw amino-acid sequence, 397 residues long: Tyrosine aminotransferase (397 aa).

Positions 34, 66, 131, and 184 each coordinate substrate. Lysine 247 carries the post-translational modification N6-(pyridoxal phosphate)lysine. Arginine 375 lines the substrate pocket.

The protein belongs to the class-I pyridoxal-phosphate-dependent aminotransferase family. In terms of assembly, homodimer. Requires pyridoxal 5'-phosphate as cofactor.

It carries out the reaction L-tyrosine + 2-oxoglutarate = 3-(4-hydroxyphenyl)pyruvate + L-glutamate. It catalyses the reaction 4-methylsulfanyl-2-oxobutanoate + L-tyrosine = 3-(4-hydroxyphenyl)pyruvate + L-methionine. The enzyme catalyses an aromatic L-alpha-amino acid + 2-oxoglutarate = an aromatic oxo-acid + L-glutamate. The catalysed reaction is L-aspartate + 2-oxoglutarate = oxaloacetate + L-glutamate. Its pathway is amino-acid biosynthesis; L-methionine biosynthesis via salvage pathway; L-methionine from S-methyl-5-thio-alpha-D-ribose 1-phosphate: step 6/6. Inhibited by malate and nitrotyrosine by approximately 20% at the higher concentration. At 100 uM, canaline and carboxymethoxylamine inhibit aminotransferase activity by 35 and 70%, respectively. Addition of 1.0 mM carboxymethoxylamine lead to a complete inhibition of the aminotransferase activity. In terms of biological role, catalyzes the formation of methionine from 2-keto-4-methylthiobutyrate (KMTB) primarily using aromatic amino acids (tyrosine, phenylalanine and tryptophan) or glutamate as the amino donors. Histidine, leucine, asparagine, or arginine are also functional amino donors but to a lesser extent. Can also use alpha-ketoglutarate, oxaloacetate and pyruvate as the amino acceptors. The chain is Tyrosine aminotransferase (tyrB) from Klebsiella pneumoniae.